Here is a 450-residue protein sequence, read N- to C-terminus: uncharacterized protein (450 aa).

It belongs to the heat shock protein 70 family.

This is an uncharacterized protein from Escherichia coli (strain K12).